The chain runs to 175 residues: uncharacterized protein (175 aa).

This is an uncharacterized protein from Methanocaldococcus jannaschii (strain ATCC 43067 / DSM 2661 / JAL-1 / JCM 10045 / NBRC 100440) (Methanococcus jannaschii).